The primary structure comprises 75 residues: Sec-independent protein translocase protein TatA (75 aa).

Residues 1–21 (MGSFSIWHWLIVLVIVVLVFG) traverse the membrane as a helical segment. Composition is skewed to basic and acidic residues over residues 43–54 (MRDSEKSGEDVQ) and 66–75 (ATDKSHTVSH). Residues 43 to 75 (MRDSEKSGEDVQQKIGGDTLDAQATDKSHTVSH) are disordered.

This sequence belongs to the TatA/E family. In terms of assembly, the Tat system comprises two distinct complexes: a TatABC complex, containing multiple copies of TatA, TatB and TatC subunits, and a separate TatA complex, containing only TatA subunits. Substrates initially bind to the TatABC complex, which probably triggers association of the separate TatA complex to form the active translocon.

It is found in the cell inner membrane. Functionally, part of the twin-arginine translocation (Tat) system that transports large folded proteins containing a characteristic twin-arginine motif in their signal peptide across membranes. TatA could form the protein-conducting channel of the Tat system. The polypeptide is Sec-independent protein translocase protein TatA (Aromatoleum aromaticum (strain DSM 19018 / LMG 30748 / EbN1) (Azoarcus sp. (strain EbN1))).